Consider the following 37-residue polypeptide: Photosystem II reaction center protein M (37 aa).

Residues 7–27 (AFIAVLLFLAVPTAFLLIPYV) form a helical membrane-spanning segment.

This sequence belongs to the PsbM family. As to quaternary structure, PSII is composed of 1 copy each of membrane proteins PsbA, PsbB, PsbC, PsbD, PsbE, PsbF, PsbH, PsbI, PsbJ, PsbK, PsbL, PsbM, PsbT, PsbX, PsbY, PsbZ, Psb30/Ycf12, at least 3 peripheral proteins of the oxygen-evolving complex and a large number of cofactors. It forms dimeric complexes.

Its subcellular location is the plastid. The protein localises to the chloroplast thylakoid membrane. Functionally, one of the components of the core complex of photosystem II (PSII). PSII is a light-driven water:plastoquinone oxidoreductase that uses light energy to abstract electrons from H(2)O, generating O(2) and a proton gradient subsequently used for ATP formation. It consists of a core antenna complex that captures photons, and an electron transfer chain that converts photonic excitation into a charge separation. This subunit is found at the monomer-monomer interface. This is Photosystem II reaction center protein M from Pinus thunbergii (Japanese black pine).